The chain runs to 122 residues: Small ribosomal subunit protein uS13 (122 aa).

A disordered region spans residues 95 to 122 (NLPVRGQRTHTNARTRKGKAKPIAGKKK).

It belongs to the universal ribosomal protein uS13 family. Part of the 30S ribosomal subunit. Forms a loose heterodimer with protein S19. Forms two bridges to the 50S subunit in the 70S ribosome.

Its function is as follows. Located at the top of the head of the 30S subunit, it contacts several helices of the 16S rRNA. In the 70S ribosome it contacts the 23S rRNA (bridge B1a) and protein L5 of the 50S subunit (bridge B1b), connecting the 2 subunits; these bridges are implicated in subunit movement. Contacts the tRNAs in the A and P-sites. This chain is Small ribosomal subunit protein uS13, found in Methylobacterium sp. (strain 4-46).